A 177-amino-acid polypeptide reads, in one-letter code: NADH-quinone oxidoreductase subunit B (177 aa).

[4Fe-4S] cluster contacts are provided by C36, C37, C101, and C130.

It belongs to the complex I 20 kDa subunit family. NDH-1 is composed of 14 different subunits. Subunits NuoB, C, D, E, F, and G constitute the peripheral sector of the complex. The cofactor is [4Fe-4S] cluster.

It localises to the cell inner membrane. It carries out the reaction a quinone + NADH + 5 H(+)(in) = a quinol + NAD(+) + 4 H(+)(out). Functionally, NDH-1 shuttles electrons from NADH, via FMN and iron-sulfur (Fe-S) centers, to quinones in the respiratory chain. The immediate electron acceptor for the enzyme in this species is believed to be ubiquinone. Couples the redox reaction to proton translocation (for every two electrons transferred, four hydrogen ions are translocated across the cytoplasmic membrane), and thus conserves the redox energy in a proton gradient. The sequence is that of NADH-quinone oxidoreductase subunit B from Hydrogenobaculum sp. (strain Y04AAS1).